The chain runs to 359 residues: MKPPQRRRRVPARYVGEATGPTAWSPREMRHLLRLLQARRGQPEPDAAELAQELRGRSEAEICRFIQQLKGRVVREAIQKMQPGGREGPRHQGTPLPAPVEVWMDLAEKLTGPMEEALTAAFSQVLTIAAAEPLSLLHSRPGKPTKARGKALVFLSNQDGQKDPASEGSGPVPMTAADPTREASVSDPKASGANPETSGLASEVTVPDPDAPTKSLAGSSTERDLAVDFEKIYKYLSFSSRGGHGPELSAAESAVVLNLLMALPEELSHLPCTALLEHMTKTYAQLMAPQTALPGEKRPRPGTEDGGTGSTGPEEPDQASPQASEPIEPRLAWKAVGICPLNPFLVPLGLVSQAPSPSR.

Over residues 1 to 11 the composition is skewed to basic residues; that stretch reads MKPPQRRRRVP. 3 disordered regions span residues 1-22, 157-221, and 291-327; these read MKPP…TGPT, NQDG…GSST, and TALP…SEPI.

In terms of assembly, part of the SNAPc complex composed of 5 subunits: SNAPC1, SNAPC2, SNAPC3, SNAPC4 and SNAPC5. SNAPC2 interacts with TBP and SNAPC4.

It is found in the nucleus. In terms of biological role, part of the SNAPc complex required for the transcription of both RNA polymerase II and III small-nuclear RNA genes. Binds to the proximal sequence element (PSE), a non-TATA-box basal promoter element common to these 2 types of genes. Recruits TBP and BRF2 to the U6 snRNA TATA box. The polypeptide is snRNA-activating protein complex subunit 2 (Snapc2) (Mus musculus (Mouse)).